A 63-amino-acid chain; its full sequence is Putative conjugal transfer lipoprotein XF_a0011.1 (63 aa).

Residues 1–15 form the signal peptide; sequence MRYTFGIVTVYLLAG. Cysteine 16 carries N-palmitoyl cysteine lipidation. Cysteine 16 carries S-diacylglycerol cysteine lipidation.

The protein to B.suis ORF12 in VirB region.

The protein localises to the cell inner membrane. The polypeptide is Putative conjugal transfer lipoprotein XF_a0011.1 (Xylella fastidiosa (strain 9a5c)).